The sequence spans 589 residues: Oligo-1,6-glucosidase IMA3 (589 aa).

D215 functions as the Nucleophile in the catalytic mechanism. E277 (proton donor) is an active-site residue.

It belongs to the glycosyl hydrolase 13 family.

It localises to the cytoplasm. The catalysed reaction is Hydrolysis of (1-&gt;6)-alpha-D-glucosidic linkages in some oligosaccharides produced from starch and glycogen by alpha-amylase, and in isomaltose.. Alpha-glucosidase with broad substrate specificity for alpha-1,4- and alpha-1,6-glucosides. Not required for isomaltose utilization, but overexpression allows the IMA1 null mutant to grow on isomaltose. The protein is Oligo-1,6-glucosidase IMA3 (IMA3) of Saccharomyces cerevisiae (strain ATCC 204508 / S288c) (Baker's yeast).